Here is a 780-residue protein sequence, read N- to C-terminus: Aconitate hydratase, mitochondrial (780 aa).

The transit peptide at M1–C27 directs the protein to the mitochondrion. Residue K31 is modified to N6-succinyllysine. The residue at position 50 (K50) is an N6-acetyllysine; alternate. At K50 the chain carries N6-succinyllysine; alternate. Q99 is a binding site for substrate. An N6-acetyllysine; alternate mark is found at K138 and K144. Residues K138 and K144 each carry the N6-succinyllysine; alternate modification. Residue D192–H194 participates in substrate binding. K233 is modified (N6-acetyllysine; alternate). N6-succinyllysine; alternate is present on K233. C385 serves as a coordination point for [4Fe-4S] cluster. N6-succinyllysine is present on K411. [4Fe-4S] cluster contacts are provided by C448 and C451. The substrate site is built by R474 and R479. The span at D528 to F537 shows a compositional bias: basic and acidic residues. Positions D528 to P560 are disordered. K549 carries the N6-succinyllysine modification. Residues S551–P560 show a composition bias toward polar residues. S559 bears the Phosphoserine mark. N6-acetyllysine; alternate is present on K573. Position 573 is an N6-succinyllysine; alternate (K573). N6-succinyllysine occurs at positions 577 and 591. An N6-acetyllysine; alternate modification is found at K605. K605 is modified (N6-succinyllysine; alternate). Residue R607 participates in substrate binding. Residue K628 is modified to N6-succinyllysine. S670 bears the Phosphoserine mark. A substrate-binding site is contributed by S670–R671. N6-succinyllysine is present on K689. N6-acetyllysine; alternate occurs at positions 723 and 730. An N6-succinyllysine; alternate mark is found at K723 and K730. Residues K736, K739, and K743 each carry the N6-acetyllysine modification.

It belongs to the aconitase/IPM isomerase family. In terms of assembly, monomer. Requires [4Fe-4S] cluster as cofactor. Forms covalent cross-links mediated by transglutaminase TGM2, between a glutamine and the epsilon-amino group of a lysine residue, forming homopolymers and heteropolymers.

It is found in the mitochondrion. The enzyme catalyses citrate = D-threo-isocitrate. Its pathway is carbohydrate metabolism; tricarboxylic acid cycle; isocitrate from oxaloacetate: step 2/2. Catalyzes the isomerization of citrate to isocitrate via cis-aconitate. The sequence is that of Aconitate hydratase, mitochondrial (ACO2) from Homo sapiens (Human).